Here is a 153-residue protein sequence, read N- to C-terminus: Phosphoribosyl-AMP cyclohydrolase (153 aa).

D93 lines the Mg(2+) pocket. A Zn(2+)-binding site is contributed by C94. 2 residues coordinate Mg(2+): D95 and D97. Residues C112 and C119 each contribute to the Zn(2+) site.

Belongs to the PRA-CH family. In terms of assembly, homodimer. The cofactor is Mg(2+). Zn(2+) serves as cofactor.

It is found in the cytoplasm. It catalyses the reaction 1-(5-phospho-beta-D-ribosyl)-5'-AMP + H2O = 1-(5-phospho-beta-D-ribosyl)-5-[(5-phospho-beta-D-ribosylamino)methylideneamino]imidazole-4-carboxamide. It participates in amino-acid biosynthesis; L-histidine biosynthesis; L-histidine from 5-phospho-alpha-D-ribose 1-diphosphate: step 3/9. Catalyzes the hydrolysis of the adenine ring of phosphoribosyl-AMP. The chain is Phosphoribosyl-AMP cyclohydrolase from Mesorhizobium japonicum (strain LMG 29417 / CECT 9101 / MAFF 303099) (Mesorhizobium loti (strain MAFF 303099)).